A 279-amino-acid polypeptide reads, in one-letter code: Phosphatidylglycerol--prolipoprotein diacylglyceryl transferase (279 aa).

3 consecutive transmembrane segments (helical) span residues 18–38 (LSVR…YFVA), 55–75 (IIFY…VIFQ), and 89–109 (IWHG…AGVI). Position 137 (Arg-137) interacts with a 1,2-diacyl-sn-glycero-3-phospho-(1'-sn-glycerol). 2 consecutive transmembrane segments (helical) span residues 203 to 223 (LGET…FIEG) and 235 to 255 (IRVA…LIVY).

Belongs to the Lgt family.

Its subcellular location is the cell membrane. The catalysed reaction is L-cysteinyl-[prolipoprotein] + a 1,2-diacyl-sn-glycero-3-phospho-(1'-sn-glycerol) = an S-1,2-diacyl-sn-glyceryl-L-cysteinyl-[prolipoprotein] + sn-glycerol 1-phosphate + H(+). Its pathway is protein modification; lipoprotein biosynthesis (diacylglyceryl transfer). In terms of biological role, catalyzes the transfer of the diacylglyceryl group from phosphatidylglycerol to the sulfhydryl group of the N-terminal cysteine of a prolipoprotein, the first step in the formation of mature lipoproteins. In Staphylococcus aureus (strain bovine RF122 / ET3-1), this protein is Phosphatidylglycerol--prolipoprotein diacylglyceryl transferase.